The sequence spans 156 residues: MEYEKKYIHSSQLFVAVRPSVIQTVLGSCVAVCLYDSKMQISGMNHYLLPLWNNDGLASPKYGNIAISKLIEAMEAVGCQRRDMVAKLFGGASPNNFNAQNGMLVGEKNIQIAHHILSEQRIKIVASDLGGTRGRKISLESNSGRVMLKYVQKTEF.

It belongs to the CheD family.

It catalyses the reaction L-glutaminyl-[protein] + H2O = L-glutamyl-[protein] + NH4(+). Functionally, probably deamidates glutamine residues to glutamate on methyl-accepting chemotaxis receptors (MCPs), playing an important role in chemotaxis. This Sulfurimonas denitrificans (strain ATCC 33889 / DSM 1251) (Thiomicrospira denitrificans (strain ATCC 33889 / DSM 1251)) protein is Probable chemoreceptor glutamine deamidase CheD.